Reading from the N-terminus, the 221-residue chain is Orotidine 5'-phosphate decarboxylase (221 aa).

Residues D12, K34, 60 to 69 (DFKVADIPNT), S117, 170 to 180 (PGVGAQGGKAS), G193, and R194 contribute to the substrate site. The active-site Proton donor is K62.

Belongs to the OMP decarboxylase family. Type 1 subfamily. In terms of assembly, homodimer.

The enzyme catalyses orotidine 5'-phosphate + H(+) = UMP + CO2. It functions in the pathway pyrimidine metabolism; UMP biosynthesis via de novo pathway; UMP from orotate: step 2/2. Its function is as follows. Catalyzes the decarboxylation of orotidine 5'-monophosphate (OMP) to uridine 5'-monophosphate (UMP). This is Orotidine 5'-phosphate decarboxylase from Methanosarcina barkeri (strain Fusaro / DSM 804).